The chain runs to 1833 residues: Protein TIC 214 (1833 aa).

6 consecutive transmembrane segments (helical) span residues isoleucine 18–glycine 38, phenylalanine 67–leucine 87, proline 90–histidine 110, leucine 127–leucine 147, valine 175–isoleucine 195, and isoleucine 218–isoleucine 238. The tract at residues glutamate 254 to lysine 301 is disordered. Basic and acidic residues-rich tracts occupy residues glutamate 259–glutamate 273 and aspartate 292–lysine 301.

This sequence belongs to the TIC214 family. Part of the Tic complex.

Its subcellular location is the plastid. The protein resides in the chloroplast inner membrane. Functionally, involved in protein precursor import into chloroplasts. May be part of an intermediate translocation complex acting as a protein-conducting channel at the inner envelope. In Spinacia oleracea (Spinach), this protein is Protein TIC 214.